The following is a 151-amino-acid chain: D-aminoacyl-tRNA deacylase (151 aa).

Residues 136–137 (GP) carry the Gly-cisPro motif, important for rejection of L-amino acids motif.

This sequence belongs to the DTD family. Homodimer.

Its subcellular location is the cytoplasm. The enzyme catalyses glycyl-tRNA(Ala) + H2O = tRNA(Ala) + glycine + H(+). It catalyses the reaction a D-aminoacyl-tRNA + H2O = a tRNA + a D-alpha-amino acid + H(+). In terms of biological role, an aminoacyl-tRNA editing enzyme that deacylates mischarged D-aminoacyl-tRNAs. Also deacylates mischarged glycyl-tRNA(Ala), protecting cells against glycine mischarging by AlaRS. Acts via tRNA-based rather than protein-based catalysis; rejects L-amino acids rather than detecting D-amino acids in the active site. By recycling D-aminoacyl-tRNA to D-amino acids and free tRNA molecules, this enzyme counteracts the toxicity associated with the formation of D-aminoacyl-tRNA entities in vivo and helps enforce protein L-homochirality. In Lactococcus lactis subsp. lactis (strain IL1403) (Streptococcus lactis), this protein is D-aminoacyl-tRNA deacylase.